A 674-amino-acid chain; its full sequence is Sodium/hydrogen exchanger 1 (674 aa).

A signal peptide spans 1–24 (MKLNKSYILIVVLLLSLFYSSVSS). The tract at residues 31–65 (KSNNHYNSDNSNNDNKNININNNNDGDGDDDDDNN) is disordered. Residues 37–55 (NSDNSNNDNKNININNNND) are compositionally biased toward low complexity. Helical transmembrane passes span 120–140 (TIIFIIMLILTGSVLIVYFII), 144–164 (IPFVPESVAVVTYGIILGIVF), 175–195 (VVSFEPENFFLFILPTIIFET), 213–233 (MFAVFGTIITFLVVGFGIYIV), 275–297 (LYILVLGESILNDATSMMLYSVV), 314–334 (VVAIGSVILGVVMALLLSLIL), 336–356 (WINIGKFPALETIFMVMFSYM), 359–379 (VLAGALDISGVLAVFFFGITL), 401–421 (TAAFISETFLFLYFGLSLTAH), 432–452 (WSILFTCLARAISVFPMCFLL), 460–480 (IPWVIQVAIWFAGLRGAFAFS), and 499–519 (NTLLVVVFTIFVFGMGTYPLL). Residues 591-674 (HELDSNPLRF…NKNNDTLPLI (84 aa)) form a disordered region. Positions 601–618 (DDDEEDDDDEDLDFDSDL) are enriched in acidic residues. Residues 627-657 (DSIHQSDNNNNDNGNNNNNNNNIIINNNSQH) are compositionally biased toward low complexity. Positions 662–674 (GSNNKNNDTLPLI) are enriched in polar residues.

It belongs to the monovalent cation:proton antiporter 1 (CPA1) transporter (TC 2.A.36) family.

It localises to the membrane. Its activity is regulated as follows. LY294002, an inhibitor of the catalytic subunit of PI3-kinase, blocks NHE1-dependent (but not NHE1-independent) increase in intracellular pH in response to cAMP. Its function is as follows. Regulation of intracellular pH homeostasis in response to cAMP, which is essential for chemotaxis. Necessary for F-actin localization and the kinetics of actin polymerization during chemotaxis and cell polarity but not for directional sensing. This Dictyostelium discoideum (Social amoeba) protein is Sodium/hydrogen exchanger 1 (nhe1).